The sequence spans 316 residues: Porphobilinogen deaminase (316 aa).

S-(dipyrrolylmethanemethyl)cysteine is present on Cys-240.

This sequence belongs to the HMBS family. As to quaternary structure, monomer. Dipyrromethane serves as cofactor.

It carries out the reaction 4 porphobilinogen + H2O = hydroxymethylbilane + 4 NH4(+). It functions in the pathway porphyrin-containing compound metabolism; protoporphyrin-IX biosynthesis; coproporphyrinogen-III from 5-aminolevulinate: step 2/4. Tetrapolymerization of the monopyrrole PBG into the hydroxymethylbilane pre-uroporphyrinogen in several discrete steps. The protein is Porphobilinogen deaminase of Alkaliphilus metalliredigens (strain QYMF).